A 239-amino-acid polypeptide reads, in one-letter code: Tubulin beta-3 chain (239 aa).

Asn22 is a binding site for GTP. Residues 207 to 239 (EESNMNDLVSEYQQYQDASAEPXXEQEEDYEEA) form a disordered region. Residues 230 to 239 (XEQEEDYEEA) are compositionally biased toward acidic residues.

It belongs to the tubulin family. As to quaternary structure, dimer of alpha and beta chains. A typical microtubule is a hollow water-filled tube with an outer diameter of 25 nm and an inner diameter of 15 nM. Alpha-beta heterodimers associate head-to-tail to form protofilaments running lengthwise along the microtubule wall with the beta-tubulin subunit facing the microtubule plus end conferring a structural polarity. Microtubules usually have 13 protofilaments but different protofilament numbers can be found in some organisms and specialized cells. It depends on Mg(2+) as a cofactor.

The protein resides in the cytoplasm. It is found in the cytoskeleton. Tubulin is the major constituent of microtubules, a cylinder consisting of laterally associated linear protofilaments composed of alpha- and beta-tubulin heterodimers. Microtubules grow by the addition of GTP-tubulin dimers to the microtubule end, where a stabilizing cap forms. Below the cap, tubulin dimers are in GDP-bound state, owing to GTPase activity of alpha-tubulin. In Anemia phyllitidis (Fern), this protein is Tubulin beta-3 chain (TUBB3).